Consider the following 243-residue polypeptide: Uridylate kinase (243 aa).

15 to 18 (KLSG) is an ATP binding site. Positions 23-28 (GEEGFG) are involved in allosteric activation by GTP. G57 contacts UMP. ATP is bound by residues G58 and R62. UMP-binding positions include D77 and 138-145 (TGNPFCTT). ATP-binding residues include T165, Y171, and D174.

It belongs to the UMP kinase family. In terms of assembly, homohexamer.

It is found in the cytoplasm. The enzyme catalyses UMP + ATP = UDP + ADP. It participates in pyrimidine metabolism; CTP biosynthesis via de novo pathway; UDP from UMP (UMPK route): step 1/1. With respect to regulation, allosterically activated by GTP. Inhibited by UTP. Catalyzes the reversible phosphorylation of UMP to UDP. This Shewanella denitrificans (strain OS217 / ATCC BAA-1090 / DSM 15013) protein is Uridylate kinase.